The following is a 343-amino-acid chain: Tetraacyldisaccharide 4'-kinase (343 aa).

Residue 58 to 65 coordinates ATP; it reads VAGGAGKT.

This sequence belongs to the LpxK family.

It carries out the reaction a lipid A disaccharide + ATP = a lipid IVA + ADP + H(+). Its pathway is glycolipid biosynthesis; lipid IV(A) biosynthesis; lipid IV(A) from (3R)-3-hydroxytetradecanoyl-[acyl-carrier-protein] and UDP-N-acetyl-alpha-D-glucosamine: step 6/6. Transfers the gamma-phosphate of ATP to the 4'-position of a tetraacyldisaccharide 1-phosphate intermediate (termed DS-1-P) to form tetraacyldisaccharide 1,4'-bis-phosphate (lipid IVA). The sequence is that of Tetraacyldisaccharide 4'-kinase from Polaromonas naphthalenivorans (strain CJ2).